Here is a 433-residue protein sequence, read N- to C-terminus: Serine/threonine-protein kinase KDX1 (433 aa).

The Protein kinase domain maps to phenylalanine 23–leucine 318. ATP is bound by residues isoleucine 29–isoleucine 37 and lysine 55. Aspartate 153 (proton acceptor) is an active-site residue.

It belongs to the protein kinase superfamily. Ser/Thr protein kinase family. As to quaternary structure, interacts with RLM1.

The enzyme catalyses L-seryl-[protein] + ATP = O-phospho-L-seryl-[protein] + ADP + H(+). It carries out the reaction L-threonyl-[protein] + ATP = O-phospho-L-threonyl-[protein] + ADP + H(+). Functionally, serine/threonine-protein kinase involved in the SLT2 mitogen-activated (MAP) kinase signaling pathway that regulates cell wall integrity. May also be involved in the mating pheromone and the CWI MAPK pathways. In Saccharomyces cerevisiae (strain ATCC 204508 / S288c) (Baker's yeast), this protein is Serine/threonine-protein kinase KDX1 (KDX1).